The following is a 162-amino-acid chain: Xanthine-guanine phosphoribosyltransferase (162 aa).

Residues 41-42 (RG) and 92-100 (DDLVDTGNT) contribute to the 5-phospho-alpha-D-ribose 1-diphosphate site. Asp93 contributes to the Mg(2+) binding site. Asp96 and Ile139 together coordinate guanine. Asp96 and Ile139 together coordinate xanthine. Residues 96-100 (DTGNT) and 138-139 (WI) each bind GMP.

This sequence belongs to the purine/pyrimidine phosphoribosyltransferase family. XGPT subfamily. Homotetramer. It depends on Mg(2+) as a cofactor.

It is found in the cell inner membrane. The enzyme catalyses GMP + diphosphate = guanine + 5-phospho-alpha-D-ribose 1-diphosphate. The catalysed reaction is XMP + diphosphate = xanthine + 5-phospho-alpha-D-ribose 1-diphosphate. It carries out the reaction IMP + diphosphate = hypoxanthine + 5-phospho-alpha-D-ribose 1-diphosphate. It functions in the pathway purine metabolism; GMP biosynthesis via salvage pathway; GMP from guanine: step 1/1. Its pathway is purine metabolism; XMP biosynthesis via salvage pathway; XMP from xanthine: step 1/1. In terms of biological role, purine salvage pathway enzyme that catalyzes the transfer of the ribosyl-5-phosphate group from 5-phospho-alpha-D-ribose 1-diphosphate (PRPP) to the N9 position of the 6-oxopurines guanine and xanthine to form the corresponding ribonucleotides GMP (guanosine 5'-monophosphate) and XMP (xanthosine 5'-monophosphate), with the release of PPi. To a lesser extent, also acts on hypoxanthine. The protein is Xanthine-guanine phosphoribosyltransferase of Chromohalobacter salexigens (strain ATCC BAA-138 / DSM 3043 / CIP 106854 / NCIMB 13768 / 1H11).